Here is a 141-residue protein sequence, read N- to C-terminus: Hemoglobin subunit alpha (141 aa).

In terms of domain architecture, Globin spans 1–141; the sequence is VLSPADKSNV…VSTVLTSKYR (141 aa). Phosphoserine is present on Ser-3. N6-succinyllysine is present on residues Lys-7 and Lys-11. Lys-16 carries the post-translational modification N6-acetyllysine; alternate. At Lys-16 the chain carries N6-succinyllysine; alternate. At Tyr-24 the chain carries Phosphotyrosine. At Ser-35 the chain carries Phosphoserine. The residue at position 40 (Lys-40) is an N6-succinyllysine. Ser-49 is modified (phosphoserine). Residue His-58 coordinates O2. His-87 contacts heme b. Phosphoserine is present on Ser-102. The residue at position 108 (Thr-108) is a Phosphothreonine. Residues Ser-124 and Ser-131 each carry the phosphoserine modification. Phosphothreonine is present on residues Thr-134 and Thr-137. Ser-138 is modified (phosphoserine).

The protein belongs to the globin family. As to quaternary structure, heterotetramer of two alpha chains and two beta chains. As to expression, red blood cells.

Its function is as follows. Involved in oxygen transport from the lung to the various peripheral tissues. In terms of biological role, hemopressin acts as an antagonist peptide of the cannabinoid receptor CNR1. Hemopressin-binding efficiently blocks cannabinoid receptor CNR1 and subsequent signaling. This chain is Hemoglobin subunit alpha (HBA), found in Saguinus mystax (Moustached tamarin).